Reading from the N-terminus, the 398-residue chain is 1-deoxy-D-xylulose 5-phosphate reductoisomerase (398 aa).

Residues Thr-10, Gly-11, Ser-12, Ile-13, Asn-38, and Asn-124 each contribute to the NADPH site. Lys-125 is a 1-deoxy-D-xylulose 5-phosphate binding site. Glu-126 provides a ligand contact to NADPH. A Mn(2+)-binding site is contributed by Asp-150. Positions 151, 152, 176, and 199 each coordinate 1-deoxy-D-xylulose 5-phosphate. Glu-152 is a Mn(2+) binding site. Gly-205 lines the NADPH pocket. Positions 212, 217, 218, and 221 each coordinate 1-deoxy-D-xylulose 5-phosphate. Glu-221 is a binding site for Mn(2+).

Belongs to the DXR family. Mg(2+) is required as a cofactor. Requires Mn(2+) as cofactor.

The enzyme catalyses 2-C-methyl-D-erythritol 4-phosphate + NADP(+) = 1-deoxy-D-xylulose 5-phosphate + NADPH + H(+). The protein operates within isoprenoid biosynthesis; isopentenyl diphosphate biosynthesis via DXP pathway; isopentenyl diphosphate from 1-deoxy-D-xylulose 5-phosphate: step 1/6. Its function is as follows. Catalyzes the NADPH-dependent rearrangement and reduction of 1-deoxy-D-xylulose-5-phosphate (DXP) to 2-C-methyl-D-erythritol 4-phosphate (MEP). The protein is 1-deoxy-D-xylulose 5-phosphate reductoisomerase of Crocosphaera subtropica (strain ATCC 51142 / BH68) (Cyanothece sp. (strain ATCC 51142)).